A 65-amino-acid polypeptide reads, in one-letter code: Alpha-like toxin Bom4 (65 aa).

In terms of domain architecture, LCN-type CS-alpha/beta spans 2–64; it reads RDAYIAQPEN…VPIRIPGKCH (63 aa). Cystine bridges form between Cys-12–Cys-63, Cys-16–Cys-36, Cys-22–Cys-46, and Cys-26–Cys-48.

It belongs to the long (4 C-C) scorpion toxin superfamily. Sodium channel inhibitor family. Alpha subfamily. In terms of tissue distribution, expressed by the venom gland.

Its subcellular location is the secreted. Its function is as follows. Alpha toxins bind voltage-independently at site-3 of sodium channels (Nav) and inhibit the inactivation of the activated channels, thereby blocking neuronal transmission. This alpha-like toxin is highly toxic to mice and insects. The polypeptide is Alpha-like toxin Bom4 (Buthus occitanus mardochei (Moroccan scorpion)).